The primary structure comprises 132 residues: Small ribosomal subunit protein uS8c (132 aa).

This sequence belongs to the universal ribosomal protein uS8 family. In terms of assembly, part of the 30S ribosomal subunit.

Its subcellular location is the plastid. It is found in the chloroplast. Its function is as follows. One of the primary rRNA binding proteins, it binds directly to 16S rRNA central domain where it helps coordinate assembly of the platform of the 30S subunit. The protein is Small ribosomal subunit protein uS8c (rps8) of Staurastrum punctulatum (Green alga).